A 727-amino-acid polypeptide reads, in one-letter code: Elongation factor 2 (727 aa).

The tr-type G domain occupies 19 to 260; that stretch reads DQIRNMGICA…MSIKHLPNPL (242 aa). GTP contacts are provided by residues 28-35, 94-98, and 148-151; these read AHIDHGKT, DTPGH, and NKVD. Diphthamide is present on histidine 603.

Belongs to the TRAFAC class translation factor GTPase superfamily. Classic translation factor GTPase family. EF-G/EF-2 subfamily.

It localises to the cytoplasm. Catalyzes the GTP-dependent ribosomal translocation step during translation elongation. During this step, the ribosome changes from the pre-translocational (PRE) to the post-translocational (POST) state as the newly formed A-site-bound peptidyl-tRNA and P-site-bound deacylated tRNA move to the P and E sites, respectively. Catalyzes the coordinated movement of the two tRNA molecules, the mRNA and conformational changes in the ribosome. The chain is Elongation factor 2 from Methanococcus maripaludis (strain C5 / ATCC BAA-1333).